Here is a 325-residue protein sequence, read N- to C-terminus: Protease HtpX homolog 2 (325 aa).

A run of 2 helical transmembrane segments spans residues 10-30 (LNMA…ALAV) and 41-61 (VGLI…QWLF). His147 is a Zn(2+) binding site. Glu148 is a catalytic residue. Position 151 (His151) interacts with Zn(2+). 2 consecutive transmembrane segments (helical) span residues 159-179 (LLMA…WLFW) and 196-216 (LVFL…LLVL). Glu223 lines the Zn(2+) pocket.

The protein belongs to the peptidase M48B family. It depends on Zn(2+) as a cofactor.

It is found in the cell membrane. In Saccharolobus solfataricus (strain ATCC 35092 / DSM 1617 / JCM 11322 / P2) (Sulfolobus solfataricus), this protein is Protease HtpX homolog 2.